Consider the following 203-residue polypeptide: Guanylate kinase (203 aa).

The 179-residue stretch at 3-181 folds into the Guanylate kinase-like domain; the sequence is GTLYIVAAPS…AVSEMCAIFT (179 aa). Residue 10 to 17 participates in ATP binding; sequence APSGAGKS.

It belongs to the guanylate kinase family.

The protein localises to the cytoplasm. The catalysed reaction is GMP + ATP = GDP + ADP. In terms of biological role, essential for recycling GMP and indirectly, cGMP. The protein is Guanylate kinase of Xanthomonas axonopodis pv. citri (strain 306).